We begin with the raw amino-acid sequence, 295 residues long: GTP-binding protein GEM (295 aa).

Positions 39–64 (CNLRNRHSTAPEEHCRRSWSSDSTDS) are disordered. GTP contacts are provided by residues 81–88 (GEQGVGKS) and 190–193 (NKSD). The interval 265–284 (ARRFWGKIVAKNNKNMAFKL) is calmodulin-binding.

This sequence belongs to the small GTPase superfamily. RGK family. In terms of assembly, interacts with calmodulin in a Ca(2+)-dependent manner. Calmodulin binding significantly decreases GTP binding. Binds ROCK1. In terms of processing, phosphorylated on tyrosine residues.

It is found in the cell membrane. Functionally, could be a regulatory protein, possibly participating in receptor-mediated signal transduction at the plasma membrane. Has guanine nucleotide-binding activity but undetectable intrinsic GTPase activity. The chain is GTP-binding protein GEM (Gem) from Mus musculus (Mouse).